A 753-amino-acid chain; its full sequence is 5-methyltetrahydropteroyltriglutamate--homocysteine methyltransferase (753 aa).

Residues 19–22 (RELK) and Arg113 contribute to the 5-methyltetrahydropteroyltri-L-glutamate site. Residues 430 to 432 (IGS) and Glu483 each bind L-homocysteine. L-methionine-binding positions include 430-432 (IGS) and Glu483. 5-methyltetrahydropteroyltri-L-glutamate contacts are provided by residues 514-515 (RC) and Trp560. Asp598 is an L-homocysteine binding site. Asp598 contributes to the L-methionine binding site. Residue Glu604 coordinates 5-methyltetrahydropteroyltri-L-glutamate. Zn(2+)-binding residues include His640, Cys642, and Glu664. Catalysis depends on His693, which acts as the Proton donor. Cys725 provides a ligand contact to Zn(2+).

This sequence belongs to the vitamin-B12 independent methionine synthase family. The cofactor is Zn(2+).

The enzyme catalyses 5-methyltetrahydropteroyltri-L-glutamate + L-homocysteine = tetrahydropteroyltri-L-glutamate + L-methionine. It functions in the pathway amino-acid biosynthesis; L-methionine biosynthesis via de novo pathway; L-methionine from L-homocysteine (MetE route): step 1/1. Its function is as follows. Catalyzes the transfer of a methyl group from 5-methyltetrahydrofolate to homocysteine resulting in methionine formation. This chain is 5-methyltetrahydropteroyltriglutamate--homocysteine methyltransferase, found in Rhodococcus jostii (strain RHA1).